A 418-amino-acid polypeptide reads, in one-letter code: Coenzyme A biosynthesis bifunctional protein CoaBC (418 aa).

The interval 1–195 (MVDHKRIPKQ…ALPYDLAGRK (195 aa)) is phosphopantothenoylcysteine decarboxylase. The segment at 196–418 (LLVTAGGTRE…IVTFLAGCSS (223 aa)) is phosphopantothenate--cysteine ligase. Asp285, Lys295, Phe336, Lys354, and Lys358 together coordinate CTP.

It in the N-terminal section; belongs to the HFCD (homo-oligomeric flavin containing Cys decarboxylase) superfamily. The protein in the C-terminal section; belongs to the PPC synthetase family. Requires Mg(2+) as cofactor. It depends on FMN as a cofactor.

The catalysed reaction is N-[(R)-4-phosphopantothenoyl]-L-cysteine + H(+) = (R)-4'-phosphopantetheine + CO2. It catalyses the reaction (R)-4'-phosphopantothenate + L-cysteine + CTP = N-[(R)-4-phosphopantothenoyl]-L-cysteine + CMP + diphosphate + H(+). The protein operates within cofactor biosynthesis; coenzyme A biosynthesis; CoA from (R)-pantothenate: step 2/5. It participates in cofactor biosynthesis; coenzyme A biosynthesis; CoA from (R)-pantothenate: step 3/5. Its function is as follows. Catalyzes two sequential steps in the biosynthesis of coenzyme A. In the first step cysteine is conjugated to 4'-phosphopantothenate to form 4-phosphopantothenoylcysteine. In the second step the latter compound is decarboxylated to form 4'-phosphopantotheine. This Mycobacterium bovis (strain ATCC BAA-935 / AF2122/97) protein is Coenzyme A biosynthesis bifunctional protein CoaBC.